The following is a 44-amino-acid chain: Antimicrobial peptide 1b (44 aa).

The Chitin-binding type-1 domain maps to 1-42; the sequence is AQKCGEQGRGAKCPNCLCCGRYGFCGSTPDYCGVGCQSQCRG. 5 disulfides stabilise this stretch: cysteine 4–cysteine 19, cysteine 13–cysteine 25, cysteine 16–cysteine 43, cysteine 18–cysteine 32, and cysteine 36–cysteine 40.

Post-translationally, contains 5 disulfide bonds.

Binds chitin. Has antifungal activity against F.oxysporum 16/10 (IC(50)=4.1 uM) and B.sorokiniana 6/10 (IC(50)=2.7 uM). Inhibits germination of fungal spores. The sequence is that of Antimicrobial peptide 1b from Leymus arenarius (Lyme grass).